We begin with the raw amino-acid sequence, 929 residues long: Chaperone protein ClpC1, chloroplastic (929 aa).

Residues 1–38 (MAMATRVLAQSTPPSLACYQRNVPSRGSGRSRRSVKMM) constitute a chloroplast transit peptide. Residues 95-237 (FERFTEKAIK…RTQVIRMVGE (143 aa)) enclose the Clp R domain. Repeat regions lie at residues 98-163 (FTEK…IGRG) and 173-237 (FTPR…MVGE). An i region spans residues 257–504 (LEEYGTNLTK…RVRLRHAQVP (248 aa)). Residue 302 to 309 (GEPGVGKT) coordinates ATP. One can recognise a UVR domain in the interval 511-546 (EKELRQITKEKNEAVRGQDFEKAGTLRDREIELRAE). The segment at 552-571 (AKGKEMSKAESETGEEGPMV) is disordered. Positions 553 to 562 (KGKEMSKAES) are enriched in basic and acidic residues. Positions 571–762 (VTESDIQHIV…LLIMTSNVGS (192 aa)) are II. Residue 645–652 (GPTGVGKS) coordinates ATP. The segment covering 908 to 919 (LNGGSGTPTTSL) has biased composition (polar residues). Positions 908–929 (LNGGSGTPTTSLEEQEDSLPVA) are disordered. Residues 920–929 (EEQEDSLPVA) show a composition bias toward acidic residues.

This sequence belongs to the ClpA/ClpB family. ClpC subfamily. As to quaternary structure, homodimer. May form hexamer and interact with Clp core. Interacts (via N-terminus) with CLPS1. Interacts with CLPF. As to expression, highly expressed in rosette leaves. Expressed in roots, stems and inflorescences. Expressed in photosynthetic green tissues with high levels in young, developing leaf tissues.

The protein resides in the plastid. The protein localises to the chloroplast stroma. Its subcellular location is the chloroplast membrane. Functionally, molecular chaperone that hydrolyzes ATP and is associated with the chloroplast protein import apparatus. May function as the motor for chloroplast protein translocation, as translocation requires ATP hydrolysis in the stroma. May interact with a ClpP-like protease involved in degradation of denatured proteins in the chloroplast. Involved in the regulation of chlorophyll b biosynthesis through the destabilization of chlorophyllide a oxygenase (CAO) protein in response to the accumulation of chlorophyll b. Involved in leaf iron homeostasis. This Arabidopsis thaliana (Mouse-ear cress) protein is Chaperone protein ClpC1, chloroplastic.